A 445-amino-acid polypeptide reads, in one-letter code: tRNA modification GTPase MnmE (445 aa).

Residues Arg-20, Glu-79, and Lys-119 each coordinate (6S)-5-formyl-5,6,7,8-tetrahydrofolate. One can recognise a TrmE-type G domain in the interval 215 to 371 (GLKLAIIGPP…ILKNIENIAE (157 aa)). Asn-225 lines the K(+) pocket. GTP contacts are provided by residues 225–230 (NAGKSS), 244–250 (SNIAGTT), and 269–272 (DTAG). Ser-229 provides a ligand contact to Mg(2+). K(+) contacts are provided by Ser-244, Ile-246, and Thr-249. Thr-250 lines the Mg(2+) pocket. Residue Lys-445 coordinates (6S)-5-formyl-5,6,7,8-tetrahydrofolate.

This sequence belongs to the TRAFAC class TrmE-Era-EngA-EngB-Septin-like GTPase superfamily. TrmE GTPase family. In terms of assembly, homodimer. Heterotetramer of two MnmE and two MnmG subunits. Requires K(+) as cofactor.

The protein localises to the cytoplasm. Its function is as follows. Exhibits a very high intrinsic GTPase hydrolysis rate. Involved in the addition of a carboxymethylaminomethyl (cmnm) group at the wobble position (U34) of certain tRNAs, forming tRNA-cmnm(5)s(2)U34. In Rickettsia canadensis (strain McKiel), this protein is tRNA modification GTPase MnmE.